A 306-amino-acid chain; its full sequence is Ribosomal RNA small subunit methyltransferase A (306 aa).

6 residues coordinate S-adenosyl-L-methionine: asparagine 37, valine 39, glycine 64, glutamate 85, aspartate 115, and asparagine 134.

This sequence belongs to the class I-like SAM-binding methyltransferase superfamily. rRNA adenine N(6)-methyltransferase family. RsmA subfamily.

Its subcellular location is the cytoplasm. It carries out the reaction adenosine(1518)/adenosine(1519) in 16S rRNA + 4 S-adenosyl-L-methionine = N(6)-dimethyladenosine(1518)/N(6)-dimethyladenosine(1519) in 16S rRNA + 4 S-adenosyl-L-homocysteine + 4 H(+). Functionally, specifically dimethylates two adjacent adenosines (A1518 and A1519) in the loop of a conserved hairpin near the 3'-end of 16S rRNA in the 30S particle. May play a critical role in biogenesis of 30S subunits. In Mycobacterium leprae (strain Br4923), this protein is Ribosomal RNA small subunit methyltransferase A.